Here is an 880-residue protein sequence, read N- to C-terminus: Kinesin heavy chain (880 aa).

Residues 4 to 327 (SIKVVCRFRP…LRFGMRAKAI (324 aa)) form the Kinesin motor domain. ATP contacts are provided by residues 85 to 92 (GQTGAGKS) and 235 to 242 (GSEKVGKT). Positions 388–426 (VSGAKAAAAQTPRPSTPSRLATESRAETPVAERSATPGI) are disordered. The segment covering 399–408 (PRPSTPSRLA) has biased composition (polar residues). Positions 428-849 (IDKDEREEFL…QEKLTTASHR (422 aa)) form a coiled coil.

This sequence belongs to the TRAFAC class myosin-kinesin ATPase superfamily. Kinesin family. Kinesin subfamily.

It localises to the cytoplasm. Its subcellular location is the cytoskeleton. Kinesin is a microtubule-associated force-producing protein that may play a role in organelle transport. Its motor activity is directed toward the microtubule's plus end. This chain is Kinesin heavy chain (klp1), found in Botryotinia fuckeliana (Noble rot fungus).